A 199-amino-acid polypeptide reads, in one-letter code: Dephospho-CoA kinase (199 aa).

One can recognise a DPCK domain in the interval 3–199; it reads ILGLTGSIGM…EVVKMPQRRA (197 aa). 11–16 lines the ATP pocket; sequence GMGKST.

This sequence belongs to the CoaE family.

The protein localises to the cytoplasm. It carries out the reaction 3'-dephospho-CoA + ATP = ADP + CoA + H(+). Its pathway is cofactor biosynthesis; coenzyme A biosynthesis; CoA from (R)-pantothenate: step 5/5. Its function is as follows. Catalyzes the phosphorylation of the 3'-hydroxyl group of dephosphocoenzyme A to form coenzyme A. This is Dephospho-CoA kinase from Bradyrhizobium diazoefficiens (strain JCM 10833 / BCRC 13528 / IAM 13628 / NBRC 14792 / USDA 110).